The primary structure comprises 236 residues: Aspartate/glutamate leucyltransferase (236 aa).

This sequence belongs to the R-transferase family. Bpt subfamily.

The protein localises to the cytoplasm. The catalysed reaction is N-terminal L-glutamyl-[protein] + L-leucyl-tRNA(Leu) = N-terminal L-leucyl-L-glutamyl-[protein] + tRNA(Leu) + H(+). It catalyses the reaction N-terminal L-aspartyl-[protein] + L-leucyl-tRNA(Leu) = N-terminal L-leucyl-L-aspartyl-[protein] + tRNA(Leu) + H(+). In terms of biological role, functions in the N-end rule pathway of protein degradation where it conjugates Leu from its aminoacyl-tRNA to the N-termini of proteins containing an N-terminal aspartate or glutamate. This is Aspartate/glutamate leucyltransferase from Halorhodospira halophila (strain DSM 244 / SL1) (Ectothiorhodospira halophila (strain DSM 244 / SL1)).